We begin with the raw amino-acid sequence, 208 residues long: uncharacterized protein (208 aa).

Over residues 1 to 18 (MSPTKDSHPSPHFPRDSG) the composition is skewed to basic and acidic residues. Disordered stretches follow at residues 1–122 (MSPT…LPPP) and 135–208 (RECH…TPDG).

This is an uncharacterized protein from Homo sapiens (Human).